The primary structure comprises 138 residues: ATP synthase epsilon chain, chloroplastic (138 aa).

It belongs to the ATPase epsilon chain family. In terms of assembly, F-type ATPases have 2 components, CF(1) - the catalytic core - and CF(0) - the membrane proton channel. CF(1) has five subunits: alpha(3), beta(3), gamma(1), delta(1), epsilon(1). CF(0) has three main subunits: a, b and c.

It localises to the plastid. Its subcellular location is the chloroplast thylakoid membrane. Its function is as follows. Produces ATP from ADP in the presence of a proton gradient across the membrane. This Huperzia lucidula (Shining clubmoss) protein is ATP synthase epsilon chain, chloroplastic.